Reading from the N-terminus, the 155-residue chain is Putative pre-16S rRNA nuclease (155 aa).

It belongs to the YqgF nuclease family.

It localises to the cytoplasm. Functionally, could be a nuclease involved in processing of the 5'-end of pre-16S rRNA. The sequence is that of Putative pre-16S rRNA nuclease from Xanthomonas campestris pv. campestris (strain B100).